We begin with the raw amino-acid sequence, 376 residues long: Ribonucleoside-diphosphate reductase subunit beta (376 aa).

Fe cation contacts are provided by aspartate 85, glutamate 116, and histidine 119. Residue tyrosine 123 is part of the active site. The Fe cation site is built by glutamate 205, glutamate 239, and histidine 242.

This sequence belongs to the ribonucleoside diphosphate reductase small chain family. Tetramer of two alpha and two beta subunits. Fe cation serves as cofactor.

The catalysed reaction is a 2'-deoxyribonucleoside 5'-diphosphate + [thioredoxin]-disulfide + H2O = a ribonucleoside 5'-diphosphate + [thioredoxin]-dithiol. In terms of biological role, provides the precursors necessary for DNA synthesis. Catalyzes the biosynthesis of deoxyribonucleotides from the corresponding ribonucleotides. The polypeptide is Ribonucleoside-diphosphate reductase subunit beta (nrdB) (Buchnera aphidicola subsp. Baizongia pistaciae (strain Bp)).